The primary structure comprises 174 residues: Ribosome maturation factor RimM (174 aa).

The region spanning 96–169 (EPDTYYDHQL…ILEIDPPDGL (74 aa)) is the PRC barrel domain.

This sequence belongs to the RimM family. As to quaternary structure, binds ribosomal protein uS19.

It is found in the cytoplasm. Its function is as follows. An accessory protein needed during the final step in the assembly of 30S ribosomal subunit, possibly for assembly of the head region. Essential for efficient processing of 16S rRNA. May be needed both before and after RbfA during the maturation of 16S rRNA. It has affinity for free ribosomal 30S subunits but not for 70S ribosomes. In Mycobacterium marinum (strain ATCC BAA-535 / M), this protein is Ribosome maturation factor RimM.